The following is a 424-amino-acid chain: Poly-cysteine and histidine-tailed protein (424 aa).

The signal sequence occupies residues 1-17 (MAFSTIVVLFVAAVGFG). A glycan (N-linked (GlcNAc...) asparagine) is linked at Asn291. The segment covering 372–390 (VGGKKQQKDQPESEKKAEN) has biased composition (basic and acidic residues). Residues 372-424 (VGGKKQQKDQPESEKKAENMPETTGNASHHQHRHHHGDSSSESHEQHHHHHHH) form a disordered region. A glycan (N-linked (GlcNAc...) asparagine) is linked at Asn397.

Glycosylated. In terms of tissue distribution, expressed in larval tissues like cuticle, hypodermis and muscle (at protein level). Note=Not excreted into striated muscle fibers or nurse cell.

The protein localises to the secreted. Functionally, binds iron and zinc. May bind nickel. This Trichinella spiralis (Trichina worm) protein is Poly-cysteine and histidine-tailed protein.